Consider the following 164-residue polypeptide: Crossover junction endodeoxyribonuclease RuvC (164 aa).

Catalysis depends on residues Asp7, Glu67, and Asp140. The Mg(2+) site is built by Asp7, Glu67, and Asp140.

Belongs to the RuvC family. Homodimer which binds Holliday junction (HJ) DNA. The HJ becomes 2-fold symmetrical on binding to RuvC with unstacked arms; it has a different conformation from HJ DNA in complex with RuvA. In the full resolvosome a probable DNA-RuvA(4)-RuvB(12)-RuvC(2) complex forms which resolves the HJ. The cofactor is Mg(2+).

The protein resides in the cytoplasm. The enzyme catalyses Endonucleolytic cleavage at a junction such as a reciprocal single-stranded crossover between two homologous DNA duplexes (Holliday junction).. Functionally, the RuvA-RuvB-RuvC complex processes Holliday junction (HJ) DNA during genetic recombination and DNA repair. Endonuclease that resolves HJ intermediates. Cleaves cruciform DNA by making single-stranded nicks across the HJ at symmetrical positions within the homologous arms, yielding a 5'-phosphate and a 3'-hydroxyl group; requires a central core of homology in the junction. The consensus cleavage sequence is 5'-(A/T)TT(C/G)-3'. Cleavage occurs on the 3'-side of the TT dinucleotide at the point of strand exchange. HJ branch migration catalyzed by RuvA-RuvB allows RuvC to scan DNA until it finds its consensus sequence, where it cleaves and resolves the cruciform DNA. The chain is Crossover junction endodeoxyribonuclease RuvC from Chloroflexus aurantiacus (strain ATCC 29364 / DSM 637 / Y-400-fl).